Reading from the N-terminus, the 175-residue chain is Ribosome maturation factor RimM (175 aa).

Residues serine 99 to leucine 172 enclose the PRC barrel domain.

It belongs to the RimM family. Binds ribosomal protein uS19.

It localises to the cytoplasm. In terms of biological role, an accessory protein needed during the final step in the assembly of 30S ribosomal subunit, possibly for assembly of the head region. Essential for efficient processing of 16S rRNA. May be needed both before and after RbfA during the maturation of 16S rRNA. It has affinity for free ribosomal 30S subunits but not for 70S ribosomes. This chain is Ribosome maturation factor RimM, found in Porphyromonas gingivalis (strain ATCC BAA-308 / W83).